A 130-amino-acid chain; its full sequence is Large ribosomal subunit protein eL34 (130 aa).

A disordered region spans residues 111–130 (KPVSKPPKIQKTAKAASKSK).

It belongs to the eukaryotic ribosomal protein eL34 family.

The sequence is that of Large ribosomal subunit protein eL34 (RpL34) from Aedes albopictus (Asian tiger mosquito).